The chain runs to 168 residues: Translationally-controlled tumor protein homolog (168 aa).

The 168-residue stretch at 1 to 168 (MLVYQDKLSG…FAHGLKEVKC (168 aa)) folds into the TCTP domain.

Belongs to the TCTP family.

The protein localises to the cytoplasm. In terms of biological role, involved in calcium binding and microtubule stabilization. In Hordeum vulgare (Barley), this protein is Translationally-controlled tumor protein homolog (TCTP).